The chain runs to 202 residues: Pycsar effector protein PtPycTM (202 aa).

3 helical membrane-spanning segments follow: residues 60–80 (GVVLAFVGVMAAGLITIAADI), 85–105 (LVILCIEGAAAVLILASAVLA), and 181–201 (ILVGMLGLVCLFVLAAGVALG).

The protein resides in the cell membrane. In terms of biological role, pycsar (pyrimidine cyclase system for antiphage resistance) provides immunity against bacteriophage. The pyrimidine cyclase (PycC) synthesizes cyclic nucleotides in response to infection; these serve as specific second messenger signals. The signals activate the adjacent effector, leading to bacterial cell death and abortive phage infection. A clade D Pycsar system. Its function is as follows. The effector gene of a two-gene Pycsar system. Expression of this and adjacent uridylate cyclase PtPycC (AC A0A4V2JTK3) probably confers resistance to bacteriophage. The genes are probably only expressed in response to bacteriophage infection. Probably only responds to cUMP (produced by its cognate NTP cyclase), acts by impairing membrane integrity. This chain is Pycsar effector protein PtPycTM, found in Propioniciclava tarda.